Consider the following 145-residue polypeptide: Large-conductance mechanosensitive channel (145 aa).

2 helical membrane passes run 30–50 (VAVVIGGAFTSIVNAFVAWLM) and 74–94 (GELVIAIINFLIIAFVIFLII).

Belongs to the MscL family. As to quaternary structure, homopentamer.

The protein localises to the cell inner membrane. Its function is as follows. Channel that opens in response to stretch forces in the membrane lipid bilayer. May participate in the regulation of osmotic pressure changes within the cell. The polypeptide is Large-conductance mechanosensitive channel (Synechocystis sp. (strain ATCC 27184 / PCC 6803 / Kazusa)).